Here is a 660-residue protein sequence, read N- to C-terminus: Probable serine/threonine-protein kinase CE0033 (660 aa).

One can recognise a Protein kinase domain in the interval 9–278; it reads YELGASIGSG…AEMAADLELL (270 aa). ATP-binding positions include 15 to 23 and K38; that span reads IGSGGMSEV. Residue D136 is the Proton acceptor of the active site. The interval 288–319 is disordered; sequence RAHVEKPDEPETVVVPQRLSTPPPPPTPAMPA. 3 consecutive PASTA domains span residues 377 to 443, 444 to 512, and 513 to 577; these read SAST…TISS, GREV…TVST, and GPSL…EISN.

The protein belongs to the protein kinase superfamily. Ser/Thr protein kinase family.

It carries out the reaction L-seryl-[protein] + ATP = O-phospho-L-seryl-[protein] + ADP + H(+). The catalysed reaction is L-threonyl-[protein] + ATP = O-phospho-L-threonyl-[protein] + ADP + H(+). This chain is Probable serine/threonine-protein kinase CE0033, found in Corynebacterium efficiens (strain DSM 44549 / YS-314 / AJ 12310 / JCM 11189 / NBRC 100395).